A 211-amino-acid polypeptide reads, in one-letter code: MNSNVENLPPHIIRRVYKEVSTLTSDPPEGIKIIPNEEDITDVQVHIEGPEGTPYAAGIFRMKLILGKDFPAAPPKGYFLTKIFHPNVSNNGEICVNVLKKDWKAELGIRHVLLTIKCLLIHPNPESALNEEAGRLLLENYEEYASRAKLMTEIHAQGSTLRGKDPTDPCSSASATVVSGDGPMAKKHAGDRDKKLAAKKKTDKKRALRRL.

Positions 11-157 constitute a UBC core domain; that stretch reads HIIRRVYKEV…AKLMTEIHAQ (147 aa). Catalysis depends on cysteine 95, which acts as the Glycyl thioester intermediate. The segment at 158–211 is disordered; sequence GSTLRGKDPTDPCSSASATVVSGDGPMAKKHAGDRDKKLAAKKKTDKKRALRRL. A compositionally biased stretch (basic residues) spans 197 to 211; that stretch reads AAKKKTDKKRALRRL.

The protein belongs to the ubiquitin-conjugating enzyme family.

The catalysed reaction is S-ubiquitinyl-[E1 ubiquitin-activating enzyme]-L-cysteine + [E2 ubiquitin-conjugating enzyme]-L-cysteine = [E1 ubiquitin-activating enzyme]-L-cysteine + S-ubiquitinyl-[E2 ubiquitin-conjugating enzyme]-L-cysteine.. Its pathway is protein modification; protein ubiquitination. Functionally, catalyzes the covalent attachment of ubiquitin to other proteins. Acts as an essential factor of the anaphase promoting complex/cyclosome (APC/C), a cell cycle-regulated ubiquitin ligase that controls progression through mitosis. Acts by specifically elongating 'Lys-11'-linked polyubiquitin chains initiated by the E2 enzyme ube2c/ubch10 on APC/C substrates, enhancing the degradation of APC/C substrates by the proteasome and promoting mitotic exit. This is Ubiquitin-conjugating enzyme E2 S-C (ube2s-c) from Xenopus laevis (African clawed frog).